The sequence spans 781 residues: Catenin beta-1 (781 aa).

An N-acetylalanine modification is found at Ala-2. The segment at 2-23 (ATQADLMELDMAMEPDRKAAVS) is interaction with VCL. Ser-23 carries the phosphoserine; by GSK3-beta; alternate modification. O-linked (GlcNAc) serine; alternate glycosylation is present at Ser-23. Residue Ser-29 is modified to Phosphoserine; by GSK3-beta. 2 positions are modified to phosphoserine; by GSK3-beta and HIPK2: Ser-33 and Ser-37. Residues 34-56 (GIHSGATTTAPSLSGKGNPEEED) form a disordered region. Position 41 is a phosphothreonine; by GSK3-beta (Thr-41). Ser-45 bears the Phosphoserine mark. N6-acetyllysine is present on Lys-49. Tyr-64 carries the phosphotyrosine; by PTK6 modification. Tyr-142 carries the phosphotyrosine; by FYN and PTK6 modification. ARM repeat units follow at residues 151 to 191 (RAIP…IMRS), 193 to 234 (QMVS…IFKS), 235 to 276 (GGIP…VRLA), 277 to 318 (GGLQ…ILAS), 319 to 360 (GGPQ…IVEA), 361 to 389 (GGMQ…RNLS), 400 to 441 (GLLG…VCQV), 442 to 484 (GGIE…AQNA), 489 to 530 (YGLP…LREQ), 531 to 571 (GAIP…EIVE), 594 to 636 (NTIP…AEGA), and 637 to 666 (TAPL…SEDK). Residues 156 to 178 (LTKLLNDEDQVVVNKAAVMVHQL) are interaction with BCL9. Position 191 is a phosphoserine; by CDK5 (Ser-191). Ser-246 carries the post-translational modification Phosphoserine; by CDK5. A phosphotyrosine mark is found at Tyr-331 and Tyr-333. Ser-552 carries the phosphoserine; by AMPK modification. Residue Thr-556 is modified to Phosphothreonine. Cys-619 carries the S-nitrosocysteine modification. The residue at position 675 (Ser-675) is a Phosphoserine. The interval 705-781 (EPLGYRQDDP…NQLAWFDTDL (77 aa)) is disordered. Over residues 734–745 (MMEHEMGGHHPG) the composition is skewed to basic and acidic residues. An interaction with SCRIB region spans residues 772–781 (NQLAWFDTDL).

This sequence belongs to the beta-catenin family. As to quaternary structure, two separate complex-associated pools are found in the cytoplasm. The majority is present as component of an E-cadherin/ catenin adhesion complex composed of at least E-cadherin/CDH1 and beta-catenin/CTNNB1, and possibly alpha-catenin/CTNNA1; the complex is located to adherens junctions. The stable association of CTNNA1 is controversial as CTNNA1 was shown not to bind to F-actin when assembled in the complex. Alternatively, the CTNNA1-containing complex may be linked to F-actin by other proteins such as LIMA1. Another cytoplasmic pool is part of a large complex containing AXIN1, AXIN2, APC, CSNK1A1 and GSK3B that promotes phosphorylation on N-terminal Ser and Thr residues and ubiquitination of CTNNB1 via BTRC and its subsequent degradation by the proteasome. Wnt-dependent activation of DVL antagonizes the action of GSK3B. When GSK3B activity is inhibited the complex dissociates, CTNNB1 is dephosphorylated and is no longer targeted for destruction. The stabilized protein translocates to the nucleus, where it binds TCF/LEF-1 family members, BCL9, BCL9L and possibly also RUVBL1 and CHD8. Binds CTNNBIP and EP300. CTNNB1 forms a ternary complex with LEF1 and EP300 that is disrupted by CTNNBIP1 binding. Interacts with TAX1BP3 (via the PDZ domain); this interaction inhibits the transcriptional activity of CTNNB1. Interacts with AJAP1, BAIAP1, CARM1, CTNNA3, CXADR and PCDH11Y. Binds NHERF1. Interacts with GLIS2 and SLC30A9. Interacts with XIRP1 and MUC1. Interacts with PTPRU (via the cytoplasmic juxtamembrane domain) and with EMD. Interacts with SCRIB. Interacts with TNIK. Interacts with SESTD1 and TRPC4. Interacts directly with AXIN1; the interaction is regulated by CDK2 phosphorylation of AXIN1. Interacts with CAV1. Interacts with TRPV4. The TRPV4 and CTNNB1 complex can interact with CDH1. Interacts with VCL. Interacts with PTPRJ. Interacts with PKT7. Interacts with FAT1 (via the cytoplasmic domain). Interacts with NANOS1 and NDRG2. Interacts with NEK2, CDK2 and CDK5. Interacts with PTK6. Interacts with SOX7; this interaction may lead to proteasomal degradation of active CTNNB1 and thus inhibition of Wnt/beta-catenin-stimulated transcription. Identified in a complex with HINT1 and MITF. Interacts with FHIT. The CTNNB1 and TCF4 complex interacts with PML. Interacts with FERMT2. Identified in a complex with TCF4 and FERMT2. Interacts with RORA. May interact with P-cadherin/CDH3. Interacts with RAPGEF2. Interacts with RNF220. Interacts with CTNND2. Interacts (via the C-terminal region) with CBY1. The complex composed, at least, of APC, CTNNB1 and GSK3B interacts with JPT1; the interaction requires the inactive form of GSK3B (phosphorylated at 'Ser-9'). Interacts with DLG5. Interacts with FAM53B; promoting translocation to the nucleus. Interacts with TMEM170B. Interacts with AHI1. Interacts with GID8. Component of an cadherin:catenin adhesion complex composed of at least of CDH26, beta-catenin/CTNNB1, alpha-catenin/CTNNA1 and p120 catenin/CTNND1. Forms a complex comprising APPL1, RUVBL2, APPL2, HDAC1 and HDAC2. Interacts with IRF2BPL; mediates the ubiquitination and degradation of CTNNB1. Interacts with LMBR1L and AMFR. Interacts with LMBR1L. Interacts with SOX30; prevents interaction of CTNNB1 with TCF7L2/TCF4 and leads to inhibition of Wnt signaling. Interacts with SOX9; inhibiting CTNNB1 activity by competing with the binding sites of TCF/LEF within CTNNB1, thereby inhibiting the Wnt signaling. Interacts with SPN/CD43 cytoplasmic tail. Interacts (when phosphorylated at Tyr-333) with isoform M2 of PKM (PKM2); promoting transcription activation. Interacts with PKP2 (via HEAD domain). Interacts with CDH1. Interacts (when unphosphorylated) with FLYWCH1, perhaps preventing interaction of CTNNB1 with TCF4, and thereby regulating transcription activation; phosphorylation of CTNNB1 may inhibit the interaction. Interacts (via the central armadillo domains) with probable transcriptional regulator ADNP (via N-terminal region); interaction is direct and stabilizes CTNNB1 by modulating its phosphorylation by glycogen synthase kinase-3 beta GSK3B. Interacts with NR5A2. Interacts with DSG2; the interaction promotes localization of CTNNB1 at cell junctions thus reducing its nuclear localization and subsequent transcription of CTNNB1/TCF-target genes. In terms of processing, phosphorylation by GSK3B requires prior phosphorylation of Ser-45 by another kinase. Phosphorylation proceeds then from Thr-41 to Ser-33. Phosphorylated by NEK2. EGF stimulates tyrosine phosphorylation. Phosphorylated on Ser-33 and Ser-37 by HIPK2. This phosphorylation triggers proteasomal degradation. Phosphorylation at Ser-552 by AMPK promotes stabilization of the protein, enhancing TCF/LEF-mediated transcription. Phosphorylation on Ser-191 and Ser-246 by CDK5. Phosphorylation by CDK2 regulates insulin internalization. Phosphorylation by PTK6 at Tyr-64, Tyr-142, Tyr-331 and/or Tyr-333 with the predominant site at Tyr-64 is not essential for inhibition of transcriptional activity. Phosphorylation by SRC at Tyr-333 promotes interaction with isoform M2 of PKM (PKM2); promoting transcription activation. Post-translationally, ubiquitinated by the SCF(BTRC) E3 ligase complex when phosphorylated by GSK3B, leading to its degradation. Ubiquitinated by a E3 ubiquitin ligase complex containing UBE2D1, SIAH1, CACYBP/SIP, SKP1, APC and TBL1X, leading to its subsequent proteasomal degradation. Ubiquitinated and degraded following interaction with SOX9. Ubiquitinated via 'Lys-11'- and 'Lys-29'-linked ubiquitin chains by UBR5, leading to its stabilization. S-nitrosylation at Cys-619 within adherens junctions promotes VEGF-induced, NO-dependent endothelial cell permeability by disrupting interaction with E-cadherin, thus mediating disassembly adherens junctions. In terms of processing, O-glycosylation at Ser-23 decreases nuclear localization and transcriptional activity, and increases localization to the plasma membrane and interaction with E-cadherin CDH1. Post-translationally, deacetylated at Lys-49 by SIRT1.

It is found in the cytoplasm. Its subcellular location is the nucleus. It localises to the cytoskeleton. The protein localises to the cell junction. The protein resides in the adherens junction. It is found in the cell membrane. Its subcellular location is the microtubule organizing center. It localises to the centrosome. The protein localises to the spindle pole. The protein resides in the synapse. It is found in the cilium basal body. Key downstream component of the canonical Wnt signaling pathway. In the absence of Wnt, forms a complex with AXIN1, AXIN2, APC, CSNK1A1 and GSK3B that promotes phosphorylation on N-terminal Ser and Thr residues and ubiquitination of CTNNB1 via BTRC and its subsequent degradation by the proteasome. In the presence of Wnt ligand, CTNNB1 is not ubiquitinated and accumulates in the nucleus, where it acts as a coactivator for transcription factors of the TCF/LEF family, leading to activate Wnt responsive genes. Also acts as a coactivator for other transcription factors, such as NR5A2. Promotes epithelial to mesenchymal transition/mesenchymal to epithelial transition (EMT/MET) via driving transcription of CTNNB1/TCF-target genes. Involved in the regulation of cell adhesion, as component of an E-cadherin:catenin adhesion complex. Acts as a negative regulator of centrosome cohesion. Involved in the CDK2/PTPN6/CTNNB1/CEACAM1 pathway of insulin internalization. Blocks anoikis of malignant kidney and intestinal epithelial cells and promotes their anchorage-independent growth by down-regulating DAPK2. Disrupts PML function and PML-NB formation by inhibiting RANBP2-mediated sumoylation of PML. Promotes neurogenesis by maintaining sympathetic neuroblasts within the cell cycle. Involved in chondrocyte differentiation via interaction with SOX9: SOX9-binding competes with the binding sites of TCF/LEF within CTNNB1, thereby inhibiting the Wnt signaling. Acts as a positive regulator of odontoblast differentiation during mesenchymal tooth germ formation, via promoting the transcription of differentiation factors such as LEF1, BMP2 and BMP4. Activity is repressed in a MSX1-mediated manner at the bell stage of mesenchymal tooth germ formation which prevents premature differentiation of odontoblasts. This chain is Catenin beta-1, found in Bos taurus (Bovine).